Here is a 381-residue protein sequence, read N- to C-terminus: Succinyl-diaminopimelate desuccinylase (381 aa).

His-71 provides a ligand contact to Zn(2+). Residue Asp-73 is part of the active site. Zn(2+) is bound at residue Asp-104. Catalysis depends on Glu-138, which acts as the Proton acceptor. Glu-139, Glu-167, and His-353 together coordinate Zn(2+).

Belongs to the peptidase M20A family. DapE subfamily. Homodimer. Zn(2+) serves as cofactor. Co(2+) is required as a cofactor.

It catalyses the reaction N-succinyl-(2S,6S)-2,6-diaminopimelate + H2O = (2S,6S)-2,6-diaminopimelate + succinate. Its pathway is amino-acid biosynthesis; L-lysine biosynthesis via DAP pathway; LL-2,6-diaminopimelate from (S)-tetrahydrodipicolinate (succinylase route): step 3/3. In terms of biological role, catalyzes the hydrolysis of N-succinyl-L,L-diaminopimelic acid (SDAP), forming succinate and LL-2,6-diaminopimelate (DAP), an intermediate involved in the bacterial biosynthesis of lysine and meso-diaminopimelic acid, an essential component of bacterial cell walls. The protein is Succinyl-diaminopimelate desuccinylase of Shewanella piezotolerans (strain WP3 / JCM 13877).